A 220-amino-acid chain; its full sequence is Ras-related protein Rab-3A (220 aa).

11 residues coordinate GTP: Ser-31, Ser-32, Val-33, Gly-34, Lys-35, Thr-36, Ser-37, Thr-48, Pro-49, Ser-53, and Thr-54. Mg(2+) is bound at residue Thr-36. The short motif at 49-58 (PAFVSTVGID) is the Switch 1 element. Mg(2+)-binding residues include Thr-54 and Asp-77. Residue Gly-80 participates in GTP binding. The short motif at 80-96 (GQERYRTITTAYYRGAM) is the Switch 2 element. At Thr-86 the chain carries Phosphothreonine. Positions 135, 136, 138, 166, and 167 each coordinate GTP. 2 positions are modified to phosphoserine: Ser-188 and Ser-190. The segment at 194–220 (ADPAVTGAKQGPQLTDQQAPPHQDCAC) is disordered. Residues Cys-218 and Cys-220 are each lipidated (S-geranylgeranyl cysteine). Residue Cys-220 is modified to Cysteine methyl ester.

This sequence belongs to the small GTPase superfamily. Rab family. In terms of assembly, interacts with RIMS1 and RIMS2. Interacts with Rabphilin-3A/RPH3A and Rab effector Noc2/RPH3AL. Interacts with SYTL4. Interacts with RAB3IP. Interacts with SGSM1 and SGSM3. Interacts with SYT1. Interacts with MYH9; this interaction is essential for lysosome exocytosis and plasma membrane repair. Interacts with STXBP1; this interaction promotes RAB3A dissociation from the vesicle membrane. Interacts with SNCA. Interacts with GDI1, GDI2, CHM and CHML; phosphorylation at Thr-86 disrupts these interactions. Interacts with MADD (via uDENN domain); the GTP-bound form is preferred for interaction. The cofactor is Mg(2+). In terms of processing, phosphorylation of Thr-86 in the switch II region by LRRK2 prevents the association of RAB regulatory proteins, including CHM, CHML and RAB GDP dissociation inhibitors GDI1 and GDI2.

It localises to the cytoplasm. The protein localises to the cytosol. The protein resides in the lysosome. It is found in the cytoplasmic vesicle. Its subcellular location is the secretory vesicle. It localises to the cell projection. The protein localises to the axon. The protein resides in the cell membrane. It is found in the presynapse. Its subcellular location is the postsynapse. It carries out the reaction GTP + H2O = GDP + phosphate + H(+). Regulated by guanine nucleotide exchange factors (GEFs) including RAB3IL1 and MADD which promote the exchange of bound GDP for free GTP. Regulated by GTPase activating proteins (GAPs) including RAB3GAP1 and TBC1D10B which increase the GTP hydrolysis activity. Inhibited by GDP dissociation inhibitors (GDIs) which prevent Rab-GDP dissociation. Functionally, the small GTPases Rab are key regulators of intracellular membrane trafficking, from the formation of transport vesicles to their fusion with membranes. Rabs cycle between an inactive GDP-bound form and an active GTP-bound form that is able to recruit to membranes different sets of downstream effectors directly responsible for vesicle formation, movement, tethering and fusion. RAB3A plays a central role in regulated exocytosis and secretion. Controls the recruitment, tethering and docking of secretory vesicles to the plasma membrane. Upon stimulation, switches to its active GTP-bound form, cycles to vesicles and recruits effectors such as RIMS1, RIMS2, Rabphilin-3A/RPH3A, RPH3AL or SYTL4 to help the docking of vesicules onto the plasma membrane. Upon GTP hydrolysis by GTPase-activating protein, dissociates from the vesicle membrane allowing the exocytosis to proceed. Stimulates insulin secretion through interaction with RIMS2 or RPH3AL effectors in pancreatic beta cells. Regulates calcium-dependent lysosome exocytosis and plasma membrane repair (PMR) via the interaction with 2 effectors, SYTL4 and myosin-9/MYH9. Acts as a positive regulator of acrosome content secretion in sperm cells by interacting with RIMS1. Also plays a role in the regulation of dopamine release by interacting with synaptotagmin I/SYT. This is Ras-related protein Rab-3A (RAB3A) from Sus scrofa (Pig).